The sequence spans 96 residues: Transcription and mRNA export factor SUS1 (96 aa).

Residue lysine 68 forms a Glycyl lysine isopeptide (Lys-Gly) (interchain with G-Cter in ubiquitin) linkage.

The protein belongs to the ENY2 family. Component of the nuclear pore complex (NPC)-associated TREX-2 complex (transcription and export complex 2), composed of at least SUS1, SAC3, THP1, SEM1, and CDC31. TREX-2 contains 2 SUS1 chains. The TREX-2 complex interacts with the nucleoporin NUP1. Component of the 1.8 MDa SAGA transcription coactivator-HAT complex. SAGA is built of 5 distinct domains with specialized functions. Within the SAGA complex, SUS1, SGF11, SGF73 and UBP8 form an additional subcomplex of SAGA called the DUB module (deubiquitination module). Interacts directly with THP1, SAC3, SGF11, and with the RNA polymerase II.

Its subcellular location is the nucleus. The protein localises to the nucleoplasm. It localises to the cytoplasm. The protein resides in the P-body. Functionally, involved in mRNA export coupled transcription activation by association with both the TREX-2 and the SAGA complexes. At the promoters, SAGA is required for recruitment of the basal transcription machinery. It influences RNA polymerase II transcriptional activity through different activities such as TBP interaction and promoter selectivity, interaction with transcription activators, and chromatin modification through histone acetylation and deubiquitination. Within the SAGA complex, participates in a subcomplex required for deubiquitination of H2B and for the maintenance of steady-state H3 methylation levels. The TREX-2 complex functions in docking export-competent ribonucleoprotein particles (mRNPs) to the nuclear entrance of the nuclear pore complex (nuclear basket). TREX-2 participates in mRNA export and accurate chromatin positioning in the nucleus by tethering genes to the nuclear periphery. May also be involved in cytoplasmic mRNA decay by interaction with components of P-bodies. The chain is Transcription and mRNA export factor SUS1 from Saccharomyces cerevisiae (strain RM11-1a) (Baker's yeast).